We begin with the raw amino-acid sequence, 324 residues long: Disintegrin-like/cysteine-rich protein MPIII-3 (324 aa).

The first 20 residues, 1–20 (MIQVLLVIICLAVFPYQVSS), serve as a signal peptide directing secretion. Residues 21-173 (IILESGNINN…DEDPKKCEFR (153 aa)) constitute a propeptide, or 174 (in a minor form). Residues 168–207 (KKCEFRRAGTECRPARSECDVAEYCTGQSAECPTDVFHSN) form the Disintegrin; truncated domain. Positions 179–192 (CRPARSECDVAEYC) are inhibits platelet aggregation. Intrachain disulfides connect Cys179–Cys199, Cys186–Cys218, Cys192–Cys199, Cys211–Cys223, Cys230–Cys280, Cys245–Cys287, Cys258–Cys268, Cys275–Cys312, and Cys306–Cys317. The D/ECD-tripeptide motif lies at 185 to 187 (ECD). Residues Asp187 and Glu190 each coordinate Ca(2+). Ca(2+)-binding residues include Asp202 and Val203. Asn237 carries N-linked (GlcNAc...) asparagine glycosylation.

This sequence belongs to the venom metalloproteinase (M12B) family. P-III subfamily. P-IIIe sub-subfamily. In terms of assembly, monomer. Is able to form a homodimer. N-glycosylated. Exists in at least six differently N-glycosylated forms. The glycans likely have a stabilizing purpose. In terms of processing, cys-199 forms a disulfide bond with Cys-192 in 90% and with Cys-179 in 10% of the protein molecules; alternative disulfide bonds may have a major effect on the conformation of the protein. Expressed by the venom gland (at protein level). Expressed by the venom gland.

The protein resides in the secreted. With respect to regulation, activity may be regulated by the intramolecular thiol-disulfide exchange or disulfide bond switching. In terms of biological role, abolishes platelet aggregation induced by collagen, ADP (IC(50)=292 nM) and arachidonic-acid. The inhibition of collagen-induced platelet aggregation may be due to its ability to bind collagen and block the binding site on collagen for platelets and/or to its ability to bind to the platelet alpha-2/beta-1 collagen receptor (ITGA2/ITGB1) to block its interaction with collagen and hence prevent platelet stimulation. The inhibition of ADP- or arachidonic-acid-induced platelet aggregation may be due to it acting as an antagonist of the ADP receptors or thromboxane-prostanoid receptors of the platelets, respectively. Does not interact with integrins alpha-IIb (ITGA2B) or beta-3 (ITGB3) nor platelet glycoproteins VI (GP6) or IX (GP9) in vitro, however, the detection is dependent on experimental conditions and may happen in vivo. Able to bind to platelet glycoprotein Ib alpha chain (GP1BA) receptor in vitro, although this interaction may have pathologically only limited effect in vivo as it is not able to abolish the von Willebrand factor (vWF)-dependent platelet agglutination induced by ristocetin. Does not affect blood coagulation. The protein is Disintegrin-like/cysteine-rich protein MPIII-3 of Vipera ammodytes ammodytes (Western sand viper).